Reading from the N-terminus, the 181-residue chain is Urease accessory protein UreE (181 aa).

Residues 143 to 181 (FDPEPGAYNQAGQGHSHGHSHGHSHNHDHEHSHGHKHAH) are disordered.

Belongs to the UreE family.

The protein resides in the cytoplasm. Its function is as follows. Involved in urease metallocenter assembly. Binds nickel. Probably functions as a nickel donor during metallocenter assembly. This is Urease accessory protein UreE from Marinobacter nauticus (strain ATCC 700491 / DSM 11845 / VT8) (Marinobacter aquaeolei).